The sequence spans 435 residues: GTPase Der (435 aa).

EngA-type G domains follow at residues 4–167 (GIVA…PSHE) and 175–350 (TRVS…TALD). Residues 10–17 (GRPNVGKS), 57–61 (DTGGI), 119–122 (NKYD), 181–188 (GRPNVGKS), 228–232 (DTAGI), and 293–296 (NKWD) contribute to the GTP site. In terms of domain architecture, KH-like spans 351–435 (KKIKTSVFNE…PMSIIFRERK (85 aa)).

This sequence belongs to the TRAFAC class TrmE-Era-EngA-EngB-Septin-like GTPase superfamily. EngA (Der) GTPase family. Associates with the 50S ribosomal subunit.

Its function is as follows. GTPase that plays an essential role in the late steps of ribosome biogenesis. The chain is GTPase Der from Mesoplasma florum (strain ATCC 33453 / NBRC 100688 / NCTC 11704 / L1) (Acholeplasma florum).